The sequence spans 65 residues: Photosystem II reaction center protein J (65 aa).

The span at 1–18 shows a compositional bias: basic and acidic residues; it reads MSSKLKGPDGRLPDRLPD. The segment at 1–21 is disordered; it reads MSSKLKGPDGRLPDRLPDGRP. The chain crosses the membrane as a helical span at residues 36–56; it reads LWLVATAGGIAVIFVLGIFFY.

It belongs to the PsbJ family. As to quaternary structure, PSII is composed of 1 copy each of membrane proteins PsbA, PsbB, PsbC, PsbD, PsbE, PsbF, PsbH, PsbI, PsbJ, PsbK, PsbL, PsbM, PsbT, PsbX, PsbY, Psb30/Ycf12, peripheral proteins PsbO, CyanoQ (PsbQ), PsbU, PsbV and a large number of cofactors. It forms dimeric complexes.

It is found in the cellular thylakoid membrane. In terms of biological role, one of the components of the core complex of photosystem II (PSII). PSII is a light-driven water:plastoquinone oxidoreductase that uses light energy to abstract electrons from H(2)O, generating O(2) and a proton gradient subsequently used for ATP formation. It consists of a core antenna complex that captures photons, and an electron transfer chain that converts photonic excitation into a charge separation. The chain is Photosystem II reaction center protein J from Prochlorococcus marinus (strain SARG / CCMP1375 / SS120).